The sequence spans 52 residues: MSLWLIYVLLLFWCAFNFCTVICNYCVPSVNFYYYSVRWMGLNFYLLCLLFA.

This is an uncharacterized protein from Bos taurus papillomavirus 4 (Bovine papillomavirus 4).